The sequence spans 1171 residues: ATP-dependent helicase/deoxyribonuclease subunit B (1171 aa).

The UvrD-like helicase ATP-binding domain occupies 1–301 (MSLRFVIGRA…AHLEMHYEAR (301 aa)). 8–15 (GRAGSGKS) contributes to the ATP binding site. The UvrD-like helicase C-terminal domain occupies 281-587 (MKQPRFHSQA…QFANIPPSLD (307 aa)). Residues Cys805, Cys1129, Cys1132, and Cys1138 each coordinate [4Fe-4S] cluster.

Belongs to the helicase family. AddB/RexB type 1 subfamily. In terms of assembly, heterodimer of AddA and AddB. Requires Mg(2+) as cofactor. [4Fe-4S] cluster serves as cofactor.

Its function is as follows. The heterodimer acts as both an ATP-dependent DNA helicase and an ATP-dependent, dual-direction single-stranded exonuclease. Recognizes the chi site generating a DNA molecule suitable for the initiation of homologous recombination. The AddB subunit has 5' -&gt; 3' nuclease activity but not helicase activity. The chain is ATP-dependent helicase/deoxyribonuclease subunit B from Bacillus mycoides (strain KBAB4) (Bacillus weihenstephanensis).